The chain runs to 518 residues: Integrator complex subunit 14 (518 aa).

The VWFA domain maps to 2 to 204; sequence PTVVVMDVSL…KNVQSMFGKL (203 aa). 3 residues coordinate Mg(2+): Ser10, Ser12, and Thr86. The segment at 373-394 is disordered; sequence SDAKENPYGDDDNKSPFPLQPK. Over residues 374–386 the composition is skewed to basic and acidic residues; it reads DAKENPYGDDDNK.

Belongs to the Integrator subunit 14 family. As to quaternary structure, component of the Integrator complex, composed of core subunits INTS1, INTS2, INTS3, INTS4, INTS5, INTS6, INTS7, INTS8, INTS9/RC74, INTS10, INTS11/CPSF3L, INTS12, INTS13, INTS14 and INTS15. The core complex associates with protein phosphatase 2A subunits PPP2CA and PPP2R1A, to form the Integrator-PP2A (INTAC) complex. INTS14 is part of the tail subcomplex, composed of INTS10, INTS13, INTS14 and INTS15.

The protein resides in the nucleus. Component of the integrator complex, a multiprotein complex that terminates RNA polymerase II (Pol II) transcription in the promoter-proximal region of genes. The integrator complex provides a quality checkpoint during transcription elongation by driving premature transcription termination of transcripts that are unfavorably configured for transcriptional elongation: the complex terminates transcription by (1) catalyzing dephosphorylation of the C-terminal domain (CTD) of Pol II subunit POLR2A/RPB1 and SUPT5H/SPT5, (2) degrading the exiting nascent RNA transcript via endonuclease activity and (3) promoting the release of Pol II from bound DNA. The integrator complex is also involved in terminating the synthesis of non-coding Pol II transcripts, such as enhancer RNAs (eRNAs), small nuclear RNAs (snRNAs), telomerase RNAs and long non-coding RNAs (lncRNAs). Within the integrator complex, INTS14 is part of the integrator tail module that acts as a platform for the recruitment of transcription factors at promoters. The chain is Integrator complex subunit 14 from Gallus gallus (Chicken).